The sequence spans 1276 residues: Component of gems protein 5 (1276 aa).

The tract at residues 53 to 55 (NWY) is interaction with U4 snRNA. WD repeat units follow at residues 92–139 (GHTD…DDHN), 183–223 (EHKA…VFPI), 228–268 (GNNI…TVCK), 271–336 (AHSA…IESG), 364–405 (NDKQ…SPPE), 438–481 (TTKN…IKIQ), 485–522 (GFVY…KDAY), and 530–574 (GIQS…SKIF). Residues 138-157 (HNEDTEIGDDFKHGSGGGGS) are disordered. The tract at residues 586–652 (IWKPPPTPTP…NSNNEQQPNK (67 aa)) is disordered. Residues 598–646 (NINNNNNNNNNNNNNNNNNNNNNNNNNNNNNNNNNNNNINNNNNNNSNN) are compositionally biased toward low complexity. WD repeat units follow at residues 688 to 727 (TFSK…LTRI) and 729 to 771 (EHKK…NQNE). Residues 772–793 (NEKKIDNEKGKENENEKGKENE) show a composition bias toward basic and acidic residues. The segment at 772 to 809 (NEKKIDNEKGKENENEKGKENENENENENENENENENE) is disordered. A coiled-coil region spans residues 778-829 (NEKGKENENEKGKENENENENENENENENENENEIENIVNNNNENDTEIEIK). Residues 794–809 (NENENENENENENENE) show a composition bias toward acidic residues. WD repeat units lie at residues 863–903 (GHKN…AISN) and 906–946 (GHDG…FKTV). The disordered stretch occupies residues 967–997 (ITEQQQQQQQPQSPIKSNPDQSNNPSLVPPI). Positions 979–992 (SPIKSNPDQSNNPS) are enriched in polar residues.

This sequence belongs to the WD repeat gemin-5 family. Part of the core SMN complex.

The protein localises to the nucleus. The protein resides in the nucleoplasm. Its subcellular location is the gem. It localises to the cytoplasm. The SMN complex catalyzes the assembly of small nuclear ribonucleoproteins (snRNPs), the building blocks of the spliceosome, and thereby plays an important role in the splicing of cellular pre-mRNAs. Most spliceosomal snRNPs contain a common set of Sm proteins SNRPB, SNRPD1, SNRPD2, SNRPD3, SNRPE, SNRPF and SNRPG that assemble in a heptameric protein ring on the Sm site of the small nuclear RNA to form the core snRNP (Sm core). In the cytosol, the Sm proteins SNRPD1, SNRPD2, SNRPE, SNRPF and SNRPG are trapped in an inactive 6S pICln-Sm complex by the chaperone CLNS1A that controls the assembly of the core snRNP. To assemble core snRNPs, the SMN complex accepts the trapped 5Sm proteins from CLNS1A forming an intermediate. Binding of snRNA inside 5Sm ultimately triggers eviction of the SMN complex, thereby allowing binding of SNRPD3 and SNRPB to complete assembly of the core snRNP. Within the SMN complex, GEMIN5 recognizes and delivers the small nuclear RNAs (snRNAs) to the SMN complex. Binds to the 7-methylguanosine cap of RNA molecules. This Dictyostelium discoideum (Social amoeba) protein is Component of gems protein 5 (gemin5).